Consider the following 396-residue polypeptide: Serine/threonine-protein kinase VRK1 (396 aa).

Positions 37 to 317 constitute a Protein kinase domain; that stretch reads WKVGLPIGQG…LLDYTEKPLY (281 aa). ATP is bound by residues 43-51 and K71; that span reads IGQGGFGCI. A Glycyl lysine isopeptide (Lys-Gly) (interchain with G-Cter in SUMO2) cross-link involves residue K71. D177 functions as the Proton acceptor in the catalytic mechanism. A Phosphoserine; by PLK3 modification is found at S342. A disordered region spans residues 354–396; it reads ITKKRKKEIEESKEPGVEDTEWSNTQTEEAIQTRSRTRKRVQK. T355 bears the Phosphothreonine; by autocatalysis mark. A compositionally biased stretch (basic and acidic residues) spans 360–369; sequence KEIEESKEPG. Polar residues predominate over residues 375–387; that stretch reads WSNTQTEEAIQTR. Residue S376 is modified to Phosphoserine. Phosphothreonine is present on T378. Positions 387–393 are required for interaction with the nucleosome; that stretch reads RSRTRKR.

This sequence belongs to the protein kinase superfamily. CK1 Ser/Thr protein kinase family. VRK subfamily. Interacts with HDAC1, KAT2B, SETDB1, KDM3A and KDM4A. Associates with the nucleosome through interactions with nucleosome DNA, histone H2A and histone H2B; the interaction with H2A and H2B is mediated by the nucleosome acidic patch, a cluster of negatively charged residues of H2A and H2B forming a cleft within the nucleosome core. In terms of assembly, (Microbial infection) Interacts with vaccinia protein B12; this interaction inhibits the repressive activity of the vaccinia virus B12 pseudokinase on viral replication factory formation. Post-translationally, autophosphorylated at various serine and threonine residues. Autophosphorylation does not impair its ability to phosphorylate p53/TP53. Phosphorylation by PLK3 leads to induction of Golgi fragmentation during mitosis. As to expression, widely expressed. Highly expressed in fetal liver, testis and thymus.

Its subcellular location is the nucleus. It localises to the cytoplasm. The protein localises to the cajal body. It catalyses the reaction L-seryl-[protein] + ATP = O-phospho-L-seryl-[protein] + ADP + H(+). The catalysed reaction is L-threonyl-[protein] + ATP = O-phospho-L-threonyl-[protein] + ADP + H(+). Its activity is regulated as follows. Active in presence of Mn(2+), Mg(2+) and Zn(2+), but is not functional with Ca(2+) or Cu(2+). Has a higher affinity for Mn(2+) than for Mg(2+). RAN inhibits its autophosphorylation and its ability to phosphorylate histone H3. Functionally, serine/threonine kinase involved in the regulation of key cellular processes including the cell cycle, nuclear condensation, transcription regulation, and DNA damage response. Controls chromatin organization and remodeling by mediating phosphorylation of histone H3 on 'Thr-4' and histone H2AX (H2aXT4ph). It also phosphorylates KAT5 in response to DNA damage, promoting KAT5 association with chromatin and histone acetyltransferase activity. Is involved in the regulation of cell cycle progression of neural progenitors, and is required for proper cortical neuronal migration. Is involved in neurite elongation and branching in motor neurons, and has an essential role in Cajal bodies assembly, acting through COIL phosphorylation and the control of coilin degradation. Involved in Golgi disassembly during the cell cycle: following phosphorylation by PLK3 during mitosis, it is required to induce Golgi fragmentation. Phosphorylates BANF1: disrupts its ability to bind DNA, reduces its binding to LEM domain-containing proteins and causes its relocalization from the nucleus to the cytoplasm. Phosphorylates TP53BP1 and p53/TP53 on 'Thr-18', preventing the interaction between p53/TP53 and MDM2. Phosphorylates ATF2 which activates its transcriptional activity. Phosphorylates JUN. This Homo sapiens (Human) protein is Serine/threonine-protein kinase VRK1.